The chain runs to 973 residues: Probable outer membrane protein pmp13 (973 aa).

A signal peptide spans 1-24 (MKTSIRKFLISTTLAPCFASTAFT). The segment covering 284 to 293 (QNNTASPQNS) has biased composition (polar residues). Residues 284-303 (QNNTASPQNSLPAPTPPPTP) are disordered. One can recognise an Autotransporter domain in the interval 691 to 973 (EDVPGKQLSI…TLDIGSKLRF (283 aa)).

Belongs to the PMP outer membrane protein family.

The protein localises to the secreted. The protein resides in the cell wall. It localises to the cell outer membrane. The chain is Probable outer membrane protein pmp13 (pmp13) from Chlamydia pneumoniae (Chlamydophila pneumoniae).